Reading from the N-terminus, the 966-residue chain is uncharacterized protein (966 aa).

Residues 1 to 24 (MQGNLLKVLGVLAIVATLVCFIFA) form the signal peptide. Helical transmembrane passes span 601-621 (IKAI…LGFA), 711-731 (LGLS…IVII), 743-763 (AFMA…FLLF), 785-805 (VVMM…LDFV), 822-842 (FIGT…INWF), and 855-875 (GVNM…YGYV). Residues 918 to 966 (TRQGITGRAEARLKQRNKTLDQAEKNRKNTQKEGGEKTNEEPPKPETPK) form a disordered region. A compositionally biased stretch (basic and acidic residues) spans 926-966 (AEARLKQRNKTLDQAEKNRKNTQKEGGEKTNEEPPKPETPK).

Belongs to the TrbL/VirB6 family.

It localises to the cell membrane. This is an uncharacterized protein from Rickettsia conorii (strain ATCC VR-613 / Malish 7).